A 580-amino-acid polypeptide reads, in one-letter code: Mucolipin-1 (580 aa).

A disordered region spans residues 1-38 (MATPAGRRASETERLLTPNPGYGTQVGTSPAPTTPTEE). The Cytoplasmic segment spans residues 1-65 (MATPAGRRAS…FRAKGRKPCK (65 aa)). Ser-10 bears the Phosphoserine mark. The Dileucine motif; mediates targeting to lysosomes signature appears at 11-16 (ETERLL). The interaction with phosphoinositides stretch occupies residues 42–62 (RRRLKYFFMSPCDKFRAKGRK). Residues 66–86 (LMLQVVKILVVTVQLILFGLS) form a helical membrane-spanning segment. At 87–298 (NQLVVTFREE…VSRHGDNSFR (212 aa)) the chain is on the extracellular side. The extracellular/lumenal pore loop stretch occupies residues 107 to 121 (LGYSDGSDDTFAAYT). A disulfide bond links Cys-166 and Cys-192. N-linked (GlcNAc...) asparagine glycosylation is found at Asn-220 and Asn-230. A disulfide bridge connects residues Cys-253 and Cys-284. Residues 299–321 (LLFDVVVILTCSLSFLLCARSLL) form a helical membrane-spanning segment. The Cytoplasmic portion of the chain corresponds to 322–350 (RGFLLQNEFVVFMWRRRGREISLWERLEF). The chain crosses the membrane as a helical span at residues 351–371 (VNGWYILLVTSDVLTISGTVM). The Extracellular segment spans residues 372 to 382 (KIGIEAKNLAS). A helical membrane pass occupies residues 383–405 (YDVCSILLGTSTLLVWVGVIRYL). The Cytoplasmic portion of the chain corresponds to 406–427 (TFFHKYNILIATLRVALPSVMR). A helical transmembrane segment spans residues 428–448 (FCCCVAVIYLGYCFCGWIVLG). Residues 449–456 (PYHVKFRS) are Extracellular-facing. Positions 457 to 477 (LSMVSECLFSLINGDDMFVTF) form an intramembrane region, pore-forming. Positions 469–474 (NGDDMF) match the Selectivity filter motif. The Extracellular portion of the chain corresponds to 478-491 (AAMQAQQGHSSLVW). The helical transmembrane segment at 492–513 (LFSQLYLYSFISLFIYMVLSLF) threads the bilayer. Topologically, residues 514-580 (IALITGAYDT…SPEDHSLLVN (67 aa)) are cytoplasmic. A Phosphoserine modification is found at Ser-557. Position 559 is a phosphoserine; by PAK (Ser-559). The tract at residues 565–567 (CCC) is required for palmitoylation and association with membranes. Positions 573–578 (EDHSLL) match the Dileucine internalization motif; mediates AP2 complex-dependent internalization motif.

The protein belongs to the transient receptor (TC 1.A.4) family. Polycystin subfamily. MCOLN1 sub-subfamily. In terms of assembly, homotetramer. Homooligomer. Can heterooligomerize with MCOLN2 or MCOLN3; heteromeric assemblies have different channel properties as compared to the respective homooligomers and may be tissue-specific. Interacts with PDCD6. Interacts with TMEM163. Interacts with LAPTM4B. Post-translationally, palmitoylated; involved in association with membranes. Phosphorylation by PKA inhibits channel activity. Dephosphorylation increases activity. In terms of processing, proteolytically cleaved probably involving multiple lysosomal proteases including cathepsin B; inhibits lysosomal channel activity. As to expression, widely expressed, with the highest expression in brain, liver and kidney.

It localises to the late endosome membrane. The protein resides in the lysosome membrane. It is found in the cytoplasmic vesicle membrane. Its subcellular location is the cell projection. The protein localises to the phagocytic cup. It localises to the cytoplasmic vesicle. The protein resides in the phagosome membrane. It is found in the cell membrane. The catalysed reaction is Ca(2+)(in) = Ca(2+)(out). The enzyme catalyses Fe(2+)(in) = Fe(2+)(out). It carries out the reaction Mg(2+)(in) = Mg(2+)(out). It catalyses the reaction K(+)(in) = K(+)(out). The catalysed reaction is Na(+)(in) = Na(+)(out). Channel activity is controlled by multiple regulatory mechanisms in different subcellular compartments. Lower pH by itself has an inhibitory effect on channel conductance. Channel function is transiently modulated by changes in Ca(2+) in a pH-dependent manner; pH changes modify the aggregation state of unitary channels; a negative cooperativity between extracellular/lumenal Ca(2+) and H(+) is suggested. Fe(2+) channel activity is potentiated by low pH. Regulated by phosphoinositides in a compartment-specific manner: in lysosomes activated by PtdIns(3,5)P2 (Phosphatidylinositol 3,5-bisphosphate) and at the plasma membrane inhibited by PtdIns(4,5)P2 (Phosphatidylinositol 4,5-bisphosphate). Nonselective cation channel probably playing a role in the regulation of membrane trafficking events and of metal homeostasis. Acts as a Ca(2+)-permeable cation channel with inwardly rectifying activity. Proposed to play a major role in Ca(2+) release from late endosome and lysosome vesicles to the cytoplasm, which is important for many lysosome-dependent cellular events, including the fusion and trafficking of these organelles, exocytosis and autophagy. Required for efficient uptake of large particles in macrophages in which Ca(2+) release from the lysosomes triggers lysosomal exocytosis. May also play a role in phagosome-lysosome fusion. Involved in lactosylceramide trafficking indicative for a role in the regulation of late endocytic membrane fusion/fission events. By mediating lysosomal Ca(2+) release is involved in regulation of mTORC1 signaling and in mTOR/TFEB-dependent lysosomal adaptation to environmental cues such as nutrient levels. Seems to act as lysosomal active oxygen species (ROS) sensor involved in ROS-induced TFEB activation and autophagy. Also functions as a Fe(2+) permeable channel in late endosomes and lysosomes. Also permeable to Mg(2+), Na(+). K(+) and Cs(+). Proposed to play a role in zinc homeostasis probably implicating its association with TMEM163. In adaptive immunity, TRPML2 and TRPML1 may play redundant roles in the function of the specialized lysosomes of B cells. In terms of biological role, may contribute to cellular lipase activity within the late endosomal pathway or at the cell surface which may be involved in processes of membrane reshaping and vesiculation, especially the growth of tubular structures. However, it is not known, whether it conveys the enzymatic activity directly, or merely facilitates the activity of an associated phospholipase. The polypeptide is Mucolipin-1 (Mus musculus (Mouse)).